A 679-amino-acid polypeptide reads, in one-letter code: Single-strand DNA endonuclease ASTE1 (679 aa).

An interaction with SHLD2 region spans residues 351–400; that stretch reads TILPTQVENMQQPNAHRISQPIRQIIYGLLLNASPHLDKTSWNALPPQPL. The disordered stretch occupies residues 625-645; it reads RSNSKKKRQKKQNTSCSKNRG. A compositionally biased stretch (basic residues) spans 626 to 635; the sequence is SNSKKKRQKK.

Belongs to the asteroid family. In terms of assembly, interacts with SHLD1, SHLD2, SHLD3, RIF1 and MAD2L2/REV7.

Its function is as follows. Structure-specific DNA endonuclease that specifically cleaves single-stranded DNA and 3' overhang DNA. Contributes to the control of DNA double-strand break repair choice by antagonizing BRCA1-dependent homologous recombination (HR) and promoting non-homologous end-joining (NHEJ). Recruited to the single-stranded DNA ends by SHLD2 and cleaves the 3' exposed DNA ends, therefore inhibiting DNA end resection (necessary for HR) and promoting DNA end protection (necessary for NHEJ). The polypeptide is Single-strand DNA endonuclease ASTE1 (ASTE1) (Pongo abelii (Sumatran orangutan)).